Reading from the N-terminus, the 828-residue chain is ADP-ribosylation factor GTPase-activating protein AGD1 (828 aa).

The 225-residue stretch at 1–225 (MHFAKLDDSP…INQVLAYAHQ (225 aa)) folds into the BAR domain. Positions 225-255 (QSRECANYEMASLNERMQEYQRQVDRETRNS) form a coiled coil. Positions 247 to 268 (QVDRETRNSCVSPTGDGMRHNS) are disordered. The PH domain occupies 288–425 (QTIRQGYLSK…WIEKITGVIA (138 aa)). Ser-441 is subject to Phosphoserine. An Arf-GAP domain is found at 498–643 (EKPIDVLTRV…IFVRKAIDSQ (146 aa)). Residues 513-536 (CADCGAPEPDWASLNLGVLICIEC) form a C4-type zinc finger. Low complexity predominate over residues 590–600 (TSSASRSSGTP). Positions 590 to 611 (TSSASRSSGTPKSDRPRKLLVR) are disordered. ANK repeat units follow at residues 735-764 (NDCS…KINA) and 768-797 (KGRT…DPNA).

As to expression, expressed in roots, but not in hypocotyls or cotyledons. Low levels detected in leaf and shoot apical meristems and in siliques.

It is found in the endosome. In terms of biological role, probable GTPase-activating protein. Regulator of membrane trafficking. Required for maintaining a straight growth of root hairs. This Arabidopsis thaliana (Mouse-ear cress) protein is ADP-ribosylation factor GTPase-activating protein AGD1 (AGD1).